The following is a 138-amino-acid chain: MDNLNELVKECGVELYDTEIANENGRAIYRIYITKNGGVSLDDCEKVSRLLSPIFDVEPPISGDYNLEVSSPGLERKLSEARHFKASLGELVKAQTAEAKFAGRLVKADDESIALENDEGVFEIKIGDIKKAKTYLEW.

It belongs to the RimP family.

The protein localises to the cytoplasm. Required for maturation of 30S ribosomal subunits. The chain is Ribosome maturation factor RimP from Campylobacter curvus (strain 525.92).